A 50-amino-acid polypeptide reads, in one-letter code: U37-theraphotoxin-Cg1b (50 aa).

The N-terminal stretch at 1–19 (MRVLLIIAGLALLSVVCYT) is a signal peptide.

The protein belongs to the neurotoxin 10 (Hwtx-1) family. 67 (Jztx-67) subfamily. In terms of tissue distribution, expressed by the venom gland.

The protein resides in the secreted. This chain is U37-theraphotoxin-Cg1b, found in Chilobrachys guangxiensis (Chinese earth tiger tarantula).